Here is a 337-residue protein sequence, read N- to C-terminus: GTPase Obg (337 aa).

In terms of domain architecture, Obg spans 1-159 (MQFIDYVKIY…RWVILELKLL (159 aa)). The region spanning 160–331 (ADVGLIGLPN…LLHYLSEKVG (172 aa)) is the OBG-type G domain. GTP is bound by residues 166–173 (GLPNAGKS), 191–195 (FTTLI), 213–216 (DIPG), 283–286 (TKID), and 312–314 (SAV). The Mg(2+) site is built by S173 and T193.

It belongs to the TRAFAC class OBG-HflX-like GTPase superfamily. OBG GTPase family. In terms of assembly, monomer. It depends on Mg(2+) as a cofactor.

The protein localises to the cytoplasm. Functionally, an essential GTPase which binds GTP, GDP and possibly (p)ppGpp with moderate affinity, with high nucleotide exchange rates and a fairly low GTP hydrolysis rate. Plays a role in control of the cell cycle, stress response, ribosome biogenesis and in those bacteria that undergo differentiation, in morphogenesis control. The chain is GTPase Obg from Thermodesulfovibrio yellowstonii (strain ATCC 51303 / DSM 11347 / YP87).